A 418-amino-acid chain; its full sequence is Staphyloferrin B transporter (418 aa).

Helical transmembrane passes span Phe19–Leu39, Leu49–Trp69, Gly88–Val108, Ile163–Phe183, Phe222–Pro242, Val257–Gly277, Ser287–Thr307, Ile317–Ala337, Met353–Thr373, and Thr377–Ile397.

The protein belongs to the major facilitator superfamily.

Its subcellular location is the cell membrane. Involved in staphyloferrin B secretion. The sequence is that of Staphyloferrin B transporter from Staphylococcus aureus (strain NCTC 8325 / PS 47).